Consider the following 474-residue polypeptide: Gamma-aminobutyric acid receptor subunit beta-1 (474 aa).

The signal sequence occupies residues 1-25 (MWTVQNRESLGLLSFPVMVAMVCCA). Residues 26-245 (HSSNEPSNMS…SFRLKRNIGY (220 aa)) are Extracellular-facing. N-linked (GlcNAc...) asparagine glycans are attached at residues asparagine 33 and asparagine 105. Tyrosine 122 serves as a coordination point for histamine. An intrachain disulfide couples cysteine 161 to cysteine 175. A glycan (N-linked (GlcNAc...) asparagine) is linked at asparagine 174. Residues 181–182 (SY) and threonine 227 contribute to the histamine site. 2 residues coordinate 4-aminobutanoate: tyrosine 182 and threonine 227. 3 helical membrane-spanning segments follow: residues 246-267 (FILQ…SFWI), 271-293 (ASAA…STHL), and 305-327 (AIDI…YAFV). At 328-451 (NYIFFGKGPQ…DLTDVNSIDK (124 aa)) the chain is on the cytoplasmic side. The chain crosses the membrane as a helical span at residues 452–473 (WSRMFFPITFSLFNVVYWLYYV).

Belongs to the ligand-gated ion channel (TC 1.A.9) family. Gamma-aminobutyric acid receptor (TC 1.A.9.5) subfamily. GABRB1 sub-subfamily. In terms of assembly, heteropentamer, formed by a combination of alpha (GABRA1-6), beta (GABRB1-3), gamma (GABRG1-3), delta (GABRD), epsilon (GABRE), rho (GABRR1-3), pi (GABRP) and theta (GABRQ) chains, each subunit exhibiting distinct physiological and pharmacological properties. Binds UBQLN1.

It is found in the postsynaptic cell membrane. It localises to the cell membrane. The enzyme catalyses chloride(in) = chloride(out). Potentiated by histamine. Functionally, beta subunit of the heteropentameric ligand-gated chloride channel gated by gamma-aminobutyric acid (GABA), a major inhibitory neurotransmitter in the brain. GABA-gated chloride channels, also named GABA(A) receptors (GABAAR), consist of five subunits arranged around a central pore and contain GABA active binding site(s) located at the alpha and beta subunit interface(s). When activated by GABA, GABAARs selectively allow the flow of chloride anions across the cell membrane down their electrochemical gradient. Chloride influx into the postsynaptic neuron following GABAAR opening decreases the neuron ability to generate a new action potential, thereby reducing nerve transmission. Beta-containing GABAARs can simultaneously bind GABA and histamine where histamine binds at the interface of two neighboring beta subunits, which may be involved in the regulation of sleep and wakefulness. The chain is Gamma-aminobutyric acid receptor subunit beta-1 from Rattus norvegicus (Rat).